A 689-amino-acid chain; its full sequence is Transcription factor BHLH42 (689 aa).

Disordered stretches follow at residues 192 to 287 (IDHH…NPRV) and 458 to 489 (DDNN…ANHV). The segment covering 206-217 (EHSTSNLATSSV) has biased composition (polar residues). A compositionally biased stretch (acidic residues) spans 246-271 (EEQEQEQEEDEDDDDDDDDEEEAESD). The tract at residues 483–496 (ELSANHVLAERRRR) is basic motif. Positions 483–532 (ELSANHVLAERRRREKLNERFIILRSLVPFVTKMDKASILGDTIEYVKQL) constitute a bHLH domain. The interval 497–532 (EKLNERFIILRSLVPFVTKMDKASILGDTIEYVKQL) is helix-loop-helix motif. Residues 547 to 570 (EIDQRSRSSGDPQRSGAKAATDKR) form a disordered region.

Belongs to the bHLH protein family. In terms of assembly, interacts with MYB123. In terms of tissue distribution, expressed in the inner pericarp of maturing fruits.

The protein resides in the nucleus. Transcription activator involved in the spatiotemporal regulation of anthocyanin biosynthesis specifically in the inner pericarp of red-fleshed kiwifruits. Functions in association with MYB123 to activate the promoters of LDOX (ANS) and F3GT1 that encode the dedicated enzymes for anthocyanin biosynthesis. The polypeptide is Transcription factor BHLH42 (Actinidia chinensis var. chinensis (Chinese soft-hair kiwi)).